Here is a 475-residue protein sequence, read N- to C-terminus: ATP synthase subunit beta, chloroplastic (475 aa).

An ATP-binding site is contributed by 156–163; the sequence is GGAGVGKT.

Belongs to the ATPase alpha/beta chains family. In terms of assembly, F-type ATPases have 2 components, CF(1) - the catalytic core - and CF(0) - the membrane proton channel. CF(1) has five subunits: alpha(3), beta(3), gamma(1), delta(1), epsilon(1). CF(0) has four main subunits: a(1), b(1), b'(1) and c(9-12).

The protein localises to the plastid. It localises to the chloroplast thylakoid membrane. The catalysed reaction is ATP + H2O + 4 H(+)(in) = ADP + phosphate + 5 H(+)(out). In terms of biological role, produces ATP from ADP in the presence of a proton gradient across the membrane. The catalytic sites are hosted primarily by the beta subunits. This is ATP synthase subunit beta, chloroplastic from Phaeodactylum tricornutum (strain CCAP 1055/1).